A 275-amino-acid polypeptide reads, in one-letter code: Phosphonoacetaldehyde hydrolase (275 aa).

Asp-15 functions as the Nucleophile in the catalytic mechanism. Mg(2+) contacts are provided by Asp-15 and Ala-17. Catalysis depends on Lys-56, which acts as the Schiff-base intermediate with substrate. Asp-189 contributes to the Mg(2+) binding site.

The protein belongs to the HAD-like hydrolase superfamily. PhnX family. As to quaternary structure, homodimer. Mg(2+) is required as a cofactor.

It carries out the reaction phosphonoacetaldehyde + H2O = acetaldehyde + phosphate + H(+). Inhibited by phosphite, moderately inhibited by phosphonic acids, the corresponding aminophosphonic acids activate the enzyme. Functionally, involved in phosphonate degradation. The protein is Phosphonoacetaldehyde hydrolase of Pseudomonas aeruginosa (strain ATCC 15692 / DSM 22644 / CIP 104116 / JCM 14847 / LMG 12228 / 1C / PRS 101 / PAO1).